Consider the following 215-residue polypeptide: Probable transaldolase 1 (215 aa).

The active-site Schiff-base intermediate with substrate is the K83.

This sequence belongs to the transaldolase family. Type 3B subfamily.

It is found in the cytoplasm. The catalysed reaction is D-sedoheptulose 7-phosphate + D-glyceraldehyde 3-phosphate = D-erythrose 4-phosphate + beta-D-fructose 6-phosphate. It participates in carbohydrate degradation; pentose phosphate pathway; D-glyceraldehyde 3-phosphate and beta-D-fructose 6-phosphate from D-ribose 5-phosphate and D-xylulose 5-phosphate (non-oxidative stage): step 2/3. Transaldolase is important for the balance of metabolites in the pentose-phosphate pathway. This chain is Probable transaldolase 1, found in Bacillus cereus (strain ATCC 14579 / DSM 31 / CCUG 7414 / JCM 2152 / NBRC 15305 / NCIMB 9373 / NCTC 2599 / NRRL B-3711).